The primary structure comprises 485 residues: Zinc finger protein 577 (485 aa).

The disordered stretch occupies residues 1 to 21 (MKNATIVMSVRREQGSSSGEG). Positions 23–94 (LSFEDVAVGF…EGAAHSQICP (72 aa)) constitute a KRAB domain. The C2H2-type 1; degenerate zinc-finger motif lies at 158 to 180 (HECSVCGRAFSRKAQLIQHQRTE). C2H2-type zinc fingers lie at residues 186–208 (HGCGECGKTFMRKIQLTEHQRTH), 214–236 (HECSECGKAFSRKSQLMVHQRTH), 242–264 (YRCSKCGKAFSRKCRLNRHQRSH), 270–292 (YGCSVCGKAFSQKAYLTAHQRLH), 298–320 (YKCSDCGRTFYFKSDLTRHQRIH), 326–348 (YECSECEKAFRSKSKLIQHQRTH), and 354–376 (YSCRECGKAFAHMSVLIKHEKTH).

Belongs to the krueppel C2H2-type zinc-finger protein family.

Its subcellular location is the nucleus. Functionally, may be involved in transcriptional regulation. This chain is Zinc finger protein 577 (ZNF577), found in Homo sapiens (Human).